The sequence spans 516 residues: Bifunctional purine biosynthesis protein PurH (516 aa).

One can recognise an MGS-like domain in the interval 1 to 146 (MTRLALLSVS…KNYAHVTVLS (146 aa)).

This sequence belongs to the PurH family.

The catalysed reaction is (6R)-10-formyltetrahydrofolate + 5-amino-1-(5-phospho-beta-D-ribosyl)imidazole-4-carboxamide = 5-formamido-1-(5-phospho-D-ribosyl)imidazole-4-carboxamide + (6S)-5,6,7,8-tetrahydrofolate. The enzyme catalyses IMP + H2O = 5-formamido-1-(5-phospho-D-ribosyl)imidazole-4-carboxamide. Its pathway is purine metabolism; IMP biosynthesis via de novo pathway; 5-formamido-1-(5-phospho-D-ribosyl)imidazole-4-carboxamide from 5-amino-1-(5-phospho-D-ribosyl)imidazole-4-carboxamide (10-formyl THF route): step 1/1. It functions in the pathway purine metabolism; IMP biosynthesis via de novo pathway; IMP from 5-formamido-1-(5-phospho-D-ribosyl)imidazole-4-carboxamide: step 1/1. The sequence is that of Bifunctional purine biosynthesis protein PurH from Rippkaea orientalis (strain PCC 8801 / RF-1) (Cyanothece sp. (strain PCC 8801)).